A 78-amino-acid chain; its full sequence is RNA-binding protein Hfq (78 aa).

A Sm domain is found at 10 to 69 (DPFLNTLRKEHVPVSIYLVNGIKLQGQIESFDQYVVLLRNTVTQMVYKHAISTVVPARAV).

It belongs to the Hfq family. In terms of assembly, homohexamer.

In terms of biological role, RNA chaperone that binds small regulatory RNA (sRNAs) and mRNAs to facilitate mRNA translational regulation in response to envelope stress, environmental stress and changes in metabolite concentrations. Also binds with high specificity to tRNAs. This chain is RNA-binding protein Hfq, found in Bordetella avium (strain 197N).